A 237-amino-acid polypeptide reads, in one-letter code: Ribose-5-phosphate isomerase A (237 aa).

Residues 33-36 (TGST), 90-93 (DGAD), and 103-106 (KGGG) contribute to the substrate site. Residue Glu-112 is the Proton acceptor of the active site. Lys-130 provides a ligand contact to substrate.

The protein belongs to the ribose 5-phosphate isomerase family. In terms of assembly, homodimer.

It catalyses the reaction aldehydo-D-ribose 5-phosphate = D-ribulose 5-phosphate. It participates in carbohydrate degradation; pentose phosphate pathway; D-ribose 5-phosphate from D-ribulose 5-phosphate (non-oxidative stage): step 1/1. Catalyzes the reversible conversion of ribose-5-phosphate to ribulose 5-phosphate. The chain is Ribose-5-phosphate isomerase A from Gloeothece citriformis (strain PCC 7424) (Cyanothece sp. (strain PCC 7424)).